We begin with the raw amino-acid sequence, 700 residues long: Polyribonucleotide nucleotidyltransferase (700 aa).

Asp485 and Asp491 together coordinate Mg(2+). One can recognise a KH domain in the interval 552 to 611; the sequence is PRITTLKINPEKIRDVIGKGGATIRALTEETGTTIELEDDGTVKIASANGDATKEAIRRI. One can recognise an S1 motif domain in the interval 621–689; that stretch reads GTVYNGKVVR…RQGRVRLSMK (69 aa).

Belongs to the polyribonucleotide nucleotidyltransferase family. As to quaternary structure, component of the RNA degradosome, which is a multiprotein complex involved in RNA processing and mRNA degradation. Requires Mg(2+) as cofactor.

Its subcellular location is the cytoplasm. It catalyses the reaction RNA(n+1) + phosphate = RNA(n) + a ribonucleoside 5'-diphosphate. Its function is as follows. Involved in mRNA degradation. Catalyzes the phosphorolysis of single-stranded polyribonucleotides processively in the 3'- to 5'-direction. This chain is Polyribonucleotide nucleotidyltransferase, found in Shewanella loihica (strain ATCC BAA-1088 / PV-4).